The sequence spans 118 residues: UPF0295 protein BcerKBAB4_0454 (118 aa).

A run of 2 helical transmembrane segments spans residues 12-32 and 43-63; these read IRTF…LGVF and FMMV…WIGM.

The protein belongs to the UPF0295 family.

It is found in the cell membrane. This chain is UPF0295 protein BcerKBAB4_0454, found in Bacillus mycoides (strain KBAB4) (Bacillus weihenstephanensis).